The sequence spans 216 residues: UPF0502 protein PFL_4004 (216 aa).

The protein belongs to the UPF0502 family.

The polypeptide is UPF0502 protein PFL_4004 (Pseudomonas fluorescens (strain ATCC BAA-477 / NRRL B-23932 / Pf-5)).